Reading from the N-terminus, the 368-residue chain is Peptide chain release factor 2 (368 aa).

At glutamine 248 the chain carries N5-methylglutamine.

Belongs to the prokaryotic/mitochondrial release factor family. In terms of processing, methylated by PrmC. Methylation increases the termination efficiency of RF2.

The protein localises to the cytoplasm. In terms of biological role, peptide chain release factor 2 directs the termination of translation in response to the peptide chain termination codons UGA and UAA. The protein is Peptide chain release factor 2 of Corynebacterium glutamicum (strain R).